The sequence spans 325 residues: Tartrate-resistant acid phosphatase type 5 (325 aa).

A signal peptide spans 1-21 (MDMWTALLILQALLLPSLADG). Aspartate 33, aspartate 71, tyrosine 74, and asparagine 110 together coordinate Fe cation. Asparagine 116 and asparagine 147 each carry an N-linked (GlcNAc...) asparagine glycan. A disulfide bond links cysteine 161 and cysteine 219. Histidine 205, histidine 240, and histidine 242 together coordinate Fe cation.

The protein belongs to the metallophosphoesterase superfamily. Purple acid phosphatase family. In terms of assembly, exists either as monomer or, after proteolytic processing, as a dimer of two chains linked by disulfide bond(s). It depends on Fe cation as a cofactor.

Its subcellular location is the lysosome. The enzyme catalyses a phosphate monoester + H2O = an alcohol + phosphate. Involved in osteopontin/bone sialoprotein dephosphorylation. Its expression seems to increase in certain pathological states such as Gaucher and Hodgkin diseases, the hairy cell, the B-cell, and the T-cell leukemias. The protein is Tartrate-resistant acid phosphatase type 5 (ACP5) of Homo sapiens (Human).